Reading from the N-terminus, the 296-residue chain is ATP phosphoribosyltransferase (296 aa).

The protein belongs to the ATP phosphoribosyltransferase family. Long subfamily. Mg(2+) serves as cofactor.

Its subcellular location is the cytoplasm. The enzyme catalyses 1-(5-phospho-beta-D-ribosyl)-ATP + diphosphate = 5-phospho-alpha-D-ribose 1-diphosphate + ATP. Its pathway is amino-acid biosynthesis; L-histidine biosynthesis; L-histidine from 5-phospho-alpha-D-ribose 1-diphosphate: step 1/9. With respect to regulation, feedback inhibited by histidine. Functionally, catalyzes the condensation of ATP and 5-phosphoribose 1-diphosphate to form N'-(5'-phosphoribosyl)-ATP (PR-ATP). Has a crucial role in the pathway because the rate of histidine biosynthesis seems to be controlled primarily by regulation of HisG enzymatic activity. The chain is ATP phosphoribosyltransferase from Halorubrum lacusprofundi (strain ATCC 49239 / DSM 5036 / JCM 8891 / ACAM 34).